We begin with the raw amino-acid sequence, 199 residues long: Prolactin-1 (199 aa).

Disulfide bonds link Cys-4-Cys-11, Cys-58-Cys-174, and Cys-191-Cys-199. Asn-60 carries an N-linked (GlcNAc...) asparagine glycan.

Belongs to the somatotropin/prolactin family. Glycosylated.

Its subcellular location is the secreted. The chain is Prolactin-1 from Alligator mississippiensis (American alligator).